We begin with the raw amino-acid sequence, 218 residues long: Ras-related protein R-Ras (218 aa).

The interval 1 to 30 (MSSGAASGTGRGRPRGGGPGPGDPPPSETH) is disordered. Positions 7-20 (SGTGRGRPRGGGPG) are enriched in gly residues. 36 to 44 (GGGGVGKSA) contacts GTP. Residues 58–66 (YDPTIEDSY) carry the Effector region motif. GTP-binding positions include 83–87 (DTAGQ), 142–145 (NKAD), and 172–174 (SAK). The residue at position 215 (cysteine 215) is a Cysteine methyl ester. A lipid anchor (S-geranylgeranyl cysteine) is attached at cysteine 215. Positions 216–218 (VLL) are cleaved as a propeptide — removed in mature form.

The protein belongs to the small GTPase superfamily. Ras family. Interacts with PLCE1. Interacts (active GTP-bound form preferentially) with RGS14. Interacts with OSBPL3. Interacts with ZDHHC19. Post-translationally, S-palmitoylated by ZDHHC19, leading to increased association with membranes and with rafts/caveolae as well as enhanced cell viability.

It is found in the cell membrane. It catalyses the reaction GTP + H2O = GDP + phosphate + H(+). Its function is as follows. GTP-binding protein with GTPase activity, likely involved in the regulation of MAPK signaling pathway and thereby controlling multiple cellular processes. Regulates the organization of the actin cytoskeleton. With OSPBL3, modulates integrin beta-1 (ITGB1) activity. The sequence is that of Ras-related protein R-Ras (RRAS) from Homo sapiens (Human).